The chain runs to 218 residues: Glutathione S-transferase Mu 1 (218 aa).

Residues 2–88 (PMILGYWDIR…YIARKHNLCG (87 aa)) enclose the GST N-terminal domain. Glutathione-binding positions include 7-8 (YW), 43-46 (RSQW), K50, 59-60 (NL), and 72-73 (QS). Residues 90–208 (TEEEMIRVDI…KSSRFLPGPL (119 aa)) form the GST C-terminal domain. Y116 contributes to the substrate binding site.

Belongs to the GST superfamily. Mu family. In terms of assembly, homodimer.

The protein localises to the cytoplasm. The catalysed reaction is RX + glutathione = an S-substituted glutathione + a halide anion + H(+). It carries out the reaction prostaglandin A2 + glutathione = prostaglandin A2-S-(R)-glutathione. The enzyme catalyses prostaglandin J2 + glutathione = prostaglandin J2-S-(R)-glutathione. It catalyses the reaction prostaglandin J2 + glutathione = prostaglandin J2-S-(S)-glutathione. The catalysed reaction is prostaglandin A2 + glutathione = prostaglandin A2-S-(S)-glutathione. It carries out the reaction 11(S)-hydroxy-14(S),15(S)-epoxy-(5Z,8Z,12E)-eicosatrienoate + glutathione = (11S,15S)-dihydroxy-14(R)-S-glutathionyl-(5Z,8Z,12E)-eicosatrienoate. Conjugation of reduced glutathione to a wide number of exogenous and endogenous hydrophobic electrophiles. Protects against the thiol-mediated metal-catalyzed oxidative inactivation of enzymes. Involved in the formation of glutathione conjugates of both prostaglandin A2 (PGA2) and prostaglandin J2 (PGJ2). Participates in the formation of novel hepoxilin regioisomers. This Bos taurus (Bovine) protein is Glutathione S-transferase Mu 1 (GSTM1).